The chain runs to 154 residues: Ribonuclease 8 (154 aa).

The N-terminal stretch at 1 to 27 is a signal peptide; that stretch reads MAPARAGCCALLLLLLGLWVAEIPVSA. His42 acts as the Proton acceptor in catalysis. 3 cysteine pairs are disulfide-bonded: Cys64–Cys118, Cys82–Cys133, and Cys89–Cys96. Substrate is bound by residues 65 to 69 and Lys90; that span reads KDLNT. His149 serves as the catalytic Proton donor.

It belongs to the pancreatic ribonuclease family.

The protein resides in the secreted. Functionally, has a low ribonuclease activity. This is Ribonuclease 8 (RNASE8) from Pongo pygmaeus (Bornean orangutan).